The following is a 277-amino-acid chain: Diaminopimelate epimerase (277 aa).

Substrate is bound by residues Asn11 and Asn62. Catalysis depends on Cys71, which acts as the Proton donor. Substrate contacts are provided by residues 72-73 (GN), Asn160, Asn193, and 211-212 (ER). Catalysis depends on Cys220, which acts as the Proton acceptor. 221-222 (GT) serves as a coordination point for substrate.

It belongs to the diaminopimelate epimerase family. In terms of assembly, homodimer.

Its subcellular location is the cytoplasm. It catalyses the reaction (2S,6S)-2,6-diaminopimelate = meso-2,6-diaminopimelate. The protein operates within amino-acid biosynthesis; L-lysine biosynthesis via DAP pathway; DL-2,6-diaminopimelate from LL-2,6-diaminopimelate: step 1/1. Functionally, catalyzes the stereoinversion of LL-2,6-diaminopimelate (L,L-DAP) to meso-diaminopimelate (meso-DAP), a precursor of L-lysine. The chain is Diaminopimelate epimerase from Methanococcus maripaludis (strain DSM 14266 / JCM 13030 / NBRC 101832 / S2 / LL).